Here is a 363-residue protein sequence, read N- to C-terminus: MAQTPAFNKPKVELHVHLDGAIKPETILYYGRKRGIALPADTPEELQNIIGMDKPLSLPEFLAKFDYYMPAIAGCREAVKRIAYEFVEMKAKDGVVYVEVRYSPHLLANSKVEPIPWNQAEGDLTPDEVVSLVNQGLQEGERDFGVKVRSILCCMRHQPSWSSEVVELCKKYREQTVVAIDLAGDETIEGSSLFPGHVKAYAEAVKSGVHRTVHAGEVGSANVVKEAVDTLKTERLGHGYHTLEDATLYNRLRQENMHFEVCPWSSYLTGAWKPDTEHPVVRFKNDQVNYSLNTDDPLIFKSTLDTDYQMTKNEMGFTEEEFKRLNINAAKSSFLPEDEKKELLDLLYKAYGMPSPASAEQCL.

A2 is subject to N-acetylalanine. The Zn(2+) site is built by H15 and H17. The substrate site is built by H17 and D19. K54 is modified (N6-acetyllysine). G184 contacts substrate. H214 is a binding site for Zn(2+). E217 (proton donor) is an active-site residue. K232 carries the post-translational modification N6-acetyllysine. Zn(2+) is bound at residue D295. D296 is a binding site for substrate.

This sequence belongs to the metallo-dependent hydrolases superfamily. Adenosine and AMP deaminases family. In terms of assembly, interacts with DPP4 (via extracellular domain). Interacts with PLG (via Kringle 4 domain); the interaction stimulates PLG activation when in complex with DPP4. Zn(2+) is required as a cofactor. In terms of tissue distribution, expressed in gastrointestinal tissues (at protein level).

The protein resides in the cell membrane. Its subcellular location is the cell junction. The protein localises to the cytoplasmic vesicle lumen. It is found in the cytoplasm. It localises to the lysosome. The enzyme catalyses adenosine + H2O + H(+) = inosine + NH4(+). The catalysed reaction is 2'-deoxyadenosine + H2O + H(+) = 2'-deoxyinosine + NH4(+). It carries out the reaction cordycepin + H2O + H(+) = 3'-deoxyinosine + NH4(+). Catalyzes the hydrolytic deamination of adenosine and 2-deoxyadenosine. Plays an important role in purine metabolism and in adenosine homeostasis. Modulates signaling by extracellular adenosine, and so contributes indirectly to cellular signaling events. Acts as a positive regulator of T-cell coactivation, by binding DPP4. Its interaction with DPP4 regulates lymphocyte-epithelial cell adhesion. Enhances dendritic cell immunogenicity by affecting dendritic cell costimulatory molecule expression and cytokines and chemokines secretion. Enhances CD4+ T-cell differentiation and proliferation. Acts as a positive modulator of adenosine receptors ADORA1 and ADORA2A, by enhancing their ligand affinity via conformational change. Stimulates plasminogen activation. Plays a role in male fertility. Plays a protective role in early postimplantation embryonic development. Also responsible for the deamination of cordycepin (3'-deoxyadenosine), a fungal natural product that shows antitumor, antibacterial, antifungal, antivirus, and immune regulation properties. This is Adenosine deaminase (ADA) from Bos taurus (Bovine).